Here is a 297-residue protein sequence, read N- to C-terminus: UTP--glucose-1-phosphate uridylyltransferase YngB (297 aa).

A signal peptide spans 1 to 27 (MRKKVRKAVIPAAGLGTRFLPATKAQP).

This sequence belongs to the UDPGP type 2 family. As to quaternary structure, homodimer.

It catalyses the reaction alpha-D-glucose 1-phosphate + UTP + H(+) = UDP-alpha-D-glucose + diphosphate. It functions in the pathway glycolipid metabolism; diglucosyl-diacylglycerol biosynthesis. In terms of biological role, catalyzes the formation of UDP-glucose from glucose-1-phosphate and UTP. This is an intermediate step in the biosynthesis of diglucosyl-diacylglycerol (Glc2-DAG), i.e. the predominant glycolipid found in B.subtilis membrane, which is also used as a membrane anchor for lipoteichoic acid (LTA). YngB contributes to wall teichoic acid (WTA) glucosylation and glycolipid formation under anaerobic fermentative growth conditions. Might also enter other glycosylation pathways, leading to the decorating of other cell envelope components with glucose residues under anaerobic or other growth conditions. This chain is UTP--glucose-1-phosphate uridylyltransferase YngB (yngB), found in Bacillus subtilis (strain 168).